A 153-amino-acid chain; its full sequence is MLDVIVLDDKQKELDNDDAKLVKKVLAFAFDFMQLKQNYEMSVNFVNDEKIHQINKEYRNTDRATDVISFALEESDRIHIDGVAEELGDLFISLDHAHAQAEEYLHSYNRELAYLAVHGFLHLLGYDHTRSQAAEDEMFGLQDKILEGYGLTK.

Residues histidine 118, histidine 122, and histidine 128 each coordinate Zn(2+).

The protein belongs to the endoribonuclease YbeY family. The cofactor is Zn(2+).

The protein localises to the cytoplasm. In terms of biological role, single strand-specific metallo-endoribonuclease involved in late-stage 70S ribosome quality control and in maturation of the 3' terminus of the 16S rRNA. The chain is Endoribonuclease YbeY from Oenococcus oeni (strain ATCC BAA-331 / PSU-1).